A 43-amino-acid polypeptide reads, in one-letter code: METATLVTIFISGSLVSFTGYALYTAFGQPSQQLRDPFEEHGD.

The helical transmembrane segment at 5 to 27 (TLVTIFISGSLVSFTGYALYTAF) threads the bilayer.

This sequence belongs to the PsbN family.

The protein localises to the plastid. Its subcellular location is the chloroplast thylakoid membrane. May play a role in photosystem I and II biogenesis. The sequence is that of Protein PsbN from Piper cenocladum (Ant piper).